Reading from the N-terminus, the 218-residue chain is Large ribosomal subunit protein bL25 (218 aa).

The interval 197-218 (PAEESGEKPVAHIEEKESTEKE) is disordered. The span at 201–218 (SGEKPVAHIEEKESTEKE) shows a compositional bias: basic and acidic residues.

Belongs to the bacterial ribosomal protein bL25 family. CTC subfamily. Part of the 50S ribosomal subunit; part of the 5S rRNA/L5/L18/L25 subcomplex. Contacts the 5S rRNA. Binds to the 5S rRNA independently of L5 and L18.

In terms of biological role, this is one of the proteins that binds to the 5S RNA in the ribosome where it forms part of the central protuberance. This Dehalococcoides mccartyi (strain ATCC BAA-2100 / JCM 16839 / KCTC 5957 / BAV1) protein is Large ribosomal subunit protein bL25.